Reading from the N-terminus, the 370-residue chain is Glutamine synthetase (370 aa).

Position 2 is an N-acetylalanine (A2). At S5 the chain carries Phosphoserine. Residues 24–103 enclose the GS beta-grasp domain; sequence IIAEYVWIDG…VLAACYNNDG (80 aa). A GS catalytic domain is found at 110 to 370; sequence HRHEAAKLFA…MTKEFERESS (261 aa). Glycyl lysine isopeptide (Lys-Gly) (interchain with G-Cter in ubiquitin) cross-links involve residues K283, K324, and K363.

It belongs to the glutamine synthetase family. In terms of assembly, homooctamer.

It is found in the cytoplasm. It carries out the reaction L-glutamate + NH4(+) + ATP = L-glutamine + ADP + phosphate + H(+). This Saccharomyces cerevisiae (strain ATCC 204508 / S288c) (Baker's yeast) protein is Glutamine synthetase (GLN1).